The chain runs to 175 residues: Pituitary adenylate cyclase-activating polypeptide (175 aa).

Residues 1–24 (MTMCSGARLALLVYGIIMHNSVSC) form the signal peptide. Positions 25–78 (SPAAGLSFPGIRPEEEAYDQDGNPLQDFYDWDPPGAGSPASALRDAYALYYPAD) are excised as a propeptide. The interval 149–157 (VKKYLAAVL) is important for receptor binding. Leu157 is subject to Leucine amide. At Lys168 the chain carries Lysine amide. Residues 172-175 (IAYL) constitute a propeptide that is removed on maturation.

The protein belongs to the glucagon family.

The protein localises to the secreted. Its function is as follows. PACAP is a neuropeptide involved in diverse array of physiological processes through activating the PACAP subfamily of class B1 G protein-coupled receptors: VIP receptor 1 (VIPR1), VIP receptor 2 (VIPR2), and PACAP type I receptor (ADCYAP1R1). Exerts neuroprotective and general cytoprotective effects due to anti-apoptotic, anti-inflammatory, and antioxidant actions. Promotes neuron projection development through the RAPGEF2/Rap1/B-Raf/ERK pathway. In chromaffin cells, induces long-lasting increase of intracellular calcium concentrations and neuroendocrine secretion. Involved in the control of glucose homeostasis, induces insulin secretion by pancreatic beta cells. PACAP exists in two bioactive forms from proteolysis of the same precursor protein, PACAP27 and PACAP38, which differ by eleven amino acid residues in the C-terminus. This is Pituitary adenylate cyclase-activating polypeptide (Adcyap1) from Rattus norvegicus (Rat).